Reading from the N-terminus, the 173-residue chain is NADH-ubiquinone oxidoreductase chain 6 (173 aa).

The next 5 membrane-spanning stretches (helical) occupy residues 1-21 (MTYLVLLLGLCFVLGGLAVAS), 27-47 (YGVVGLVLASVAGCGWLLSLG), 48-68 (VSFVSLVLFMVYLGGMLVVFV), 88-108 (VGYGASFILVVIAGMIVGGLI), and 139-159 (YGVGMFLVAGWGLLLTLFVVL).

Belongs to the complex I subunit 6 family.

It is found in the mitochondrion membrane. The enzyme catalyses a ubiquinone + NADH + 5 H(+)(in) = a ubiquinol + NAD(+) + 4 H(+)(out). Its function is as follows. Core subunit of the mitochondrial membrane respiratory chain NADH dehydrogenase (Complex I) that is believed to belong to the minimal assembly required for catalysis. Complex I functions in the transfer of electrons from NADH to the respiratory chain. The immediate electron acceptor for the enzyme is believed to be ubiquinone. This is NADH-ubiquinone oxidoreductase chain 6 (MT-ND6) from Calidris maritima (Purple sandpiper).